Consider the following 648-residue polypeptide: Threonine--tRNA ligase (648 aa).

One can recognise a TGS domain in the interval 1–61 (MIDIILPDGS…INTATVKAIT (61 aa)). The interval 243–549 (DHRKLGRELE…LIEHYSGRLP (307 aa)) is catalytic. Residues Cys349, His400, and His526 each coordinate Zn(2+).

It belongs to the class-II aminoacyl-tRNA synthetase family. As to quaternary structure, homodimer. Requires Zn(2+) as cofactor.

The protein localises to the cytoplasm. It catalyses the reaction tRNA(Thr) + L-threonine + ATP = L-threonyl-tRNA(Thr) + AMP + diphosphate + H(+). Catalyzes the attachment of threonine to tRNA(Thr) in a two-step reaction: L-threonine is first activated by ATP to form Thr-AMP and then transferred to the acceptor end of tRNA(Thr). Also edits incorrectly charged L-seryl-tRNA(Thr). The sequence is that of Threonine--tRNA ligase from Orientia tsutsugamushi (strain Boryong) (Rickettsia tsutsugamushi).